A 2097-amino-acid chain; its full sequence is MATDDKSSPTLDSANDLPRSPASPSHLTHFKPLTPDQDEPPFKSAYSSFVNLFRFNKERGEGGQGEQQSPSSSWASPQIPSRTQSVRSPVPYKKQLNEELHRRSSVLDSRRKAEPACGGHDPRTAVQLRSLSTVLKRLKEIMEGKSQDSDLKQYWMPDSQCKECYDCSEKFTTFRRRHHCRLCGQIFCSRCCNQEIPGKFMGYTGDLRACTYCRKIALSYAHSTDSNSIGEDLNALSDSTCSVSILDPSEPRTPVGSRKASRNIFLEDDLAWQSLIHPDSSNSALSTRLVSVQEDAGKSPARNRSASITNLSLDRSGSPMVPSYETSVSPQANRNYIRTETTEDERKILLDSAQLKDLWKKICHHTSGMEFQDHRYWLRTHPNCIVGKELVNWLIRNGHIATRAQAIAIGQAMVDGRWLDCVSHHDQLFRDEYALYRPLQSTEFSETPSPDSDSVNSVEGHSEPSWFKDIKFDDSDTEQIAEEGDDNLANSASPSKRTSVSSFQSTVDSDSAASISLNVELDNVNFHIKKPSKYPHVPPHPADQKEYLVSDTGGQQLSISDAFIKESLFNRRVEEKSKELPFTPLGWHHNNLELLREENEEKQAMERLLSANHNHMMALLQQLLQNESLSSSWRDIIVSLVCQVVQTVRPDVKHQDDDMDIRQFVHIKKIPGGKKFDSVVVNGFVCTKNIAHKKMNSCIKNPKILLLKCSIEYLYREETKFTCIDPIVLQEREFLKNYVQRIVDVRPTLVLVEKTVSRIAQDMLLEHGITLVINVKSQVLERISRMTQGDLVVSMDQLLTKPHLGTCHKFYMQIFQLPNEQTKTLMFFEGCPQHLGCTIKLRGGSDYELARVKEILIFMICVAYHSQLEISFLMDEFAMPPTLMQSPSFHLLTEGRGEEGASQEQVSGSSLPQDPECPREALSSEDSTLLESRTVLEKGELDNKSIPQAVASLKHQDYTTPTCPAGIPCALFALVPESLLPLHMDQQDAVGNEQPETSQQTDEQQDPKSQMKAFRDPLQDDTGMYVTEEVTSSEDQRKTYALTFKQELKDVILCISPVITFREPFLLTEKGMRCSTRDYFPEQIYWSPLLNKEVKEMESRRKKQLLRDLSGLQGMNGSVQAKSIQVLPSHELVSTRIAEHLGDSQTLGRMLADYRARGGRIQSKHLDPFVHSKDASCTSGGKSGNKTESDEERGLIPSDVIWPTKVDCLNPANHQRLCVLFSSSSAQSSNAPSACVSPWIVTMEFYGKNDLTLGIFLERYCFRSSYQCPSMFCDTPMVHHIRRFVHGQGCVQIILKELDSPVPGYQHTILTYSWCRICKQVTPVVALSNESWSMSFAKYLELRFYGHQYTRRANAEPCGHSIHHDYHQYFSYNQMVASFSYSPIRLLEVCVPLPKIFIKRQAPLKVSLLQDLKDFFQKVSQVYLAVDERLASLKTDTFSKTREEKMEDIFAQKEMEEGEFKNWTEKMQARLMSSSVDTPQQLQSIFESLIAKKQSLCEVLQAWNSRLQDLFQQEKGRKRPSVPPSPGRLRQGEESKINAMDTSPRNISPGLHNGEKEDRFLTTLSSQSSTSSTHLQLPTPPEALAEQVVGGPTDLDSASGSEDVFDGHLLGSTDSQVKEKSTMKAIFANLLPGNSYNPIPFPFDPDKHYLMYEHERVPIAVCEKEPSSIIAFALSCKEYRNALEELSKATLRNSAEEGLPANSALDNRPKSSSPIRLPEISGGQTNRTVEAEPQPTKKASGMLSFFRGTAGKSPDLSSQKRETLRGADSAYYQVGQAGKEGLESQGLEPQDEVDGGDTQKKQLTNPHVELQFSDANAKFYCRLYYAGEFHKMREVILGSSEEEFIRSLSHSSPWQARGGKSGAAFYATEDDRFILKQMPRLEVQSFLDFAPHYFNYITNAVQQKRPTALAKILGVYRIGYKNSQNNTEKKLDLLVMENLFYGRKMAQVFDLKGSLRNRNVKTDTGKESCDVVLLDENLLKMVRDNPLYIRSHSKSVLRTSIHSDAHFLSSHLIIDYSLLVGRDDTSNELVVGIIDYIRTFTWDKKLEMVVKSTGILGGQGKMPTVVSPELYRTRFCEAMDKYFLMVPDHWTGLDLNC.

The interval 1-44 (MATDDKSSPTLDSANDLPRSPASPSHLTHFKPLTPDQDEPPFKS) is disordered. Ala2 is modified (N-acetylalanine). Phosphoserine; by autocatalysis occurs at positions 23 and 48. Positions 56–122 (NKERGEGGQG…AEPACGGHDP (67 aa)) are disordered. Over residues 66 to 81 (EQQSPSSSWASPQIPS) the composition is skewed to low complexity. At Ser88 the chain carries Phosphoserine. Residues 158-218 (DSQCKECYDC…ACTYCRKIAL (61 aa)) form an FYVE-type zinc finger. Positions 164, 167, 180, 183, 188, 191, 210, and 213 each coordinate Zn(2+). Phosphoserine is present on residues Ser299, Ser307, and Ser312. At Ser318 the chain carries Phosphoserine; by PKB/AKT1 or PKB/AKT2. Phosphoserine is present on Ser329. A DEP domain is found at 365–440 (HTSGMEFQDH…DEYALYRPLQ (76 aa)). Over residues 442 to 459 (TEFSETPSPDSDSVNSVE) the composition is skewed to polar residues. The segment at 442–469 (TEFSETPSPDSDSVNSVEGHSEPSWFKD) is disordered. Residues 460–469 (GHSEPSWFKD) are compositionally biased toward basic and acidic residues. The residue at position 475 (Ser475) is a Phosphoserine. A disordered region spans residues 484–505 (GDDNLANSASPSKRTSVSSFQS). The span at 488–505 (LANSASPSKRTSVSSFQS) shows a compositional bias: polar residues. The interval 616 to 868 (MMALLQQLLQ…MICVAYHSQL (253 aa)) is chaperonin-like domain. Disordered stretches follow at residues 895-928 (GRGE…EDST), 989-1022 (AVGN…QDDT), 1171-1194 (HSKD…EERG), and 1511-1555 (FQQE…HNGE). Residues 902–912 (SQEQVSGSSLP) are compositionally biased toward polar residues. Residues 1175–1184 (ASCTSGGKSG) show a composition bias toward polar residues. Basic and acidic residues predominate over residues 1185–1194 (NKTESDEERG). Ser1543 and Ser1548 each carry phosphoserine. A Phosphoserine; by autocatalysis modification is found at Ser1668. The disordered stretch occupies residues 1697–1742 (EGLPANSALDNRPKSSSPIRLPEISGGQTNRTVEAEPQPTKKASGM). The residue at position 1753 (Ser1753) is a Phosphoserine. One can recognise a PIPK domain in the interval 1757-2083 (SSQKRETLRG…RFCEAMDKYF (327 aa)). Residues 1781-1800 (GLESQGLEPQDEVDGGDTQK) are disordered. Residues 1841 to 2097 (EEEFIRSLSH…DHWTGLDLNC (257 aa)) are catalytic. Phosphoserine; by autocatalysis is present on residues Ser1968 and Ser2052.

Component of the PI(3,5)P2 regulatory complex/PAS complex, at least composed of PIKFYVE, FIG4 and VAC14. VAC14 nucleates the assembly of the complex and serves as a scaffold by pentamerizing into a star-shaped structure, which can bind a single copy each of PIKFYVE and FIG4 and coordinates their activities. Interacts (via chaperonin-like domain) with RABEPK; the interaction recruits RABEPK to the endosomal membrane. Interacts with SPAG9. Interacts with EGFR. Requires Mn(2+) as cofactor. Phosphorylated in response to insulin at Ser-318 in a protein kinase B (PKB)-dependent manner. Autophosphorylates which down-regulates lipid product formation. Post-translationally, autophosphorylates which inhibits its own phosphatidylinositol 3-phosphate 5-kinase activity, stimulates FIG4 lipid phosphatase activity and down-regulates lipid product formation. Dephosphorylated by FIG4 in the PI(3,5)P2 regulatory complex, at Ser-48, Ser-1668 and Ser-2052. Phosphorylated in response to insulin at Ser-318 in a protein kinase B (PKB)-dependent manner. Ubiquitous.

It localises to the endosome membrane. The protein resides in the early endosome membrane. The protein localises to the cytoplasmic vesicle. It is found in the phagosome membrane. Its subcellular location is the late endosome membrane. It carries out the reaction a 1,2-diacyl-sn-glycero-3-phospho-(1D-myo-inositol-3-phosphate) + ATP = a 1,2-diacyl-sn-glycero-3-phospho-(1D-myo-inositol-3,5-bisphosphate) + ADP + H(+). The catalysed reaction is a 1,2-diacyl-sn-glycero-3-phospho-(1D-myo-inositol) + ATP = a 1,2-diacyl-sn-glycero-3-phospho-(1D-myo-inositol-5-phosphate) + ADP + H(+). The enzyme catalyses L-seryl-[protein] + ATP = O-phospho-L-seryl-[protein] + ADP + H(+). Its activity is regulated as follows. Inhibited by apilimod and YM201636. In terms of biological role, dual specificity kinase implicated in myriad essential cellular processes such as maintenance of endomembrane homeostasis, and endocytic-vacuolar pathway, lysosomal trafficking, nuclear transport, stress- or hormone-induced signaling and cell cycle progression. The PI(3,5)P2 regulatory complex regulates both the synthesis and turnover of phosphatidylinositol 3,5-bisphosphate (PtdIns(3,5)P2). Sole enzyme to catalyze the phosphorylation of phosphatidylinositol 3-phosphate on the fifth hydroxyl of the myo-inositol ring, to form (PtdIns(3,5)P2). Also catalyzes the phosphorylation of phosphatidylinositol on the fifth hydroxyl of the myo-inositol ring, to form phosphatidylinositol 5-phosphate (PtdIns(5)P). Has serine-protein kinase activity and is able to autophosphorylate and transphosphorylate. Autophosphorylation inhibits its own phosphatidylinositol 3-phosphate 5-kinase activity, stimulates FIG4 lipid phosphatase activity and down-regulates lipid product formation. Involved in key endosome operations such as fission and fusion in the course of endosomal cargo transport. Required for the maturation of early into late endosomes, phagosomes and lysosomes. Regulates vacuole maturation and nutrient recovery following engulfment of macromolecules, initiates the redistribution of accumulated lysosomal contents back into the endosome network. Critical regulator of the morphology, degradative activity, and protein turnover of the endolysosomal system in macrophages and platelets. In neutrophils, critical to perform chemotaxis, generate ROS, and undertake phagosome fusion with lysosomes. Plays a key role in the processing and presentation of antigens by major histocompatibility complex class II (MHC class II) mediated by CTSS. Regulates melanosome biogenesis by controlling the delivery of proteins from the endosomal compartment to the melanosome. Essential for systemic glucose homeostasis, mediates insulin-induced signals for endosome/actin remodeling in the course of GLUT4 translocation/glucose uptake activation. Supports microtubule-based endosome-to-trans-Golgi network cargo transport, trhough association with SPAG9 and RABEPK. Mediates EGFR trafficking to the nucleus. The sequence is that of 1-phosphatidylinositol 3-phosphate 5-kinase from Mus musculus (Mouse).